The primary structure comprises 697 residues: Disintegrin and metalloproteinase domain-containing protein 26A (697 aa).

Residues 1-22 (MFLKFCLWTMFFFSAWSPIGHA) form the signal peptide. Residues 23-187 (KYSSLLEVVT…NAPTLLQIPY (165 aa)) constitute a propeptide that is removed on maturation. Asn-127 carries an N-linked (GlcNAc...) asparagine glycan. The Cysteine switch motif lies at 159–166 (MRCGLSEE). A Zn(2+)-binding site is contributed by Cys-161. Residues 188–671 (ENWWTHHRFI…PPLPLSHSKW (484 aa)) are Extracellular-facing. Positions 195 to 385 (RFIEYFVVLD…TKRSCLYDIP (191 aa)) constitute a Peptidase M12B domain. N-linked (GlcNAc...) asparagine glycosylation is present at Asn-214. 3 disulfides stabilise this stretch: Cys-305–Cys-380, Cys-344–Cys-366, and Cys-346–Cys-351. His-329 serves as a coordination point for Zn(2+). Residue Glu-330 is part of the active site. 2 residues coordinate Zn(2+): His-333 and His-339. Residues Asn-365, Asn-391, Asn-464, Asn-506, Asn-531, and Asn-573 are each glycosylated (N-linked (GlcNAc...) asparagine). Residues 392–478 (LTVCGNKVVE…ECPGDVYKAD (87 aa)) enclose the Disintegrin domain. Cysteines 450 and 470 form a disulfide. One can recognise an EGF-like domain in the interval 616–649 (LVSNCSPQLYHMQGICNNKQHCHCGVTWKPPDCQ). Cystine bridges form between Cys-620-Cys-631 and Cys-639-Cys-648. A helical membrane pass occupies residues 672–692 (IVYILIVLDVCIVIIIYLFSF). At 693–697 (YKLSK) the chain is on the cytoplasmic side.

It depends on Zn(2+) as a cofactor. In terms of tissue distribution, expressed in sperm (at protein level). Expressed specifically in testis.

It is found in the membrane. In terms of biological role, sperm surface membrane protein that may be involved in spermatogenesis and fertilization. The protein is Disintegrin and metalloproteinase domain-containing protein 26A of Mus musculus (Mouse).